Consider the following 520-residue polypeptide: Chaperone Ric-8B (520 aa).

Position 468 is a phosphoserine (Ser468). The residue at position 473 (Thr473) is a Phosphothreonine.

This sequence belongs to the synembryn family. In terms of assembly, interacts with GDP-bound G(s) G-alpha proteins GNAL and GNAS. Does not interact with G-alpha proteins when they are in complex with subunits beta and gamma.

The protein resides in the cytoplasm. It is found in the cell cortex. In terms of biological role, chaperone that specifically binds and folds nascent G(s) G-alpha proteins (GNAS and GNAL) prior to G protein heterotrimer formation, promoting their association with the plasma membrane. Also acts as a guanine nucleotide exchange factor (GEF) for G(s) proteins by stimulating exchange of bound GDP for free GTP. Acts as an important component for odorant signal transduction by mediating GNAL (G(olf)-alpha) folding, thereby promoting-dependent cAMP accumulation in olfactory sensory neurons. The protein is Chaperone Ric-8B (Ric8b) of Rattus norvegicus (Rat).